Here is a 221-residue protein sequence, read N- to C-terminus: ATP phosphoribosyltransferase (221 aa).

It belongs to the ATP phosphoribosyltransferase family. Short subfamily. Heteromultimer composed of HisG and HisZ subunits.

It is found in the cytoplasm. The enzyme catalyses 1-(5-phospho-beta-D-ribosyl)-ATP + diphosphate = 5-phospho-alpha-D-ribose 1-diphosphate + ATP. The protein operates within amino-acid biosynthesis; L-histidine biosynthesis; L-histidine from 5-phospho-alpha-D-ribose 1-diphosphate: step 1/9. Its function is as follows. Catalyzes the condensation of ATP and 5-phosphoribose 1-diphosphate to form N'-(5'-phosphoribosyl)-ATP (PR-ATP). Has a crucial role in the pathway because the rate of histidine biosynthesis seems to be controlled primarily by regulation of HisG enzymatic activity. The sequence is that of ATP phosphoribosyltransferase from Carboxydothermus hydrogenoformans (strain ATCC BAA-161 / DSM 6008 / Z-2901).